We begin with the raw amino-acid sequence, 274 residues long: Penicillin-insensitive murein endopeptidase (274 aa).

A signal peptide spans 1-19 (MNKTAIALLALLASSASLA). 3 disulfide bridges follow: C44–C265, C187–C235, and C216–C223. Residues H110, H113, D120, D147, H150, and H211 each coordinate Zn(2+).

It belongs to the peptidase M74 family. Dimer. The cofactor is Zn(2+).

The protein resides in the periplasm. Functionally, murein endopeptidase that cleaves the D-alanyl-meso-2,6-diamino-pimelyl amide bond that connects peptidoglycan strands. Likely plays a role in the removal of murein from the sacculus. This Shigella sonnei (strain Ss046) protein is Penicillin-insensitive murein endopeptidase.